A 120-amino-acid chain; its full sequence is Large ribosomal subunit protein bL20 (120 aa).

It belongs to the bacterial ribosomal protein bL20 family.

In terms of biological role, binds directly to 23S ribosomal RNA and is necessary for the in vitro assembly process of the 50S ribosomal subunit. It is not involved in the protein synthesizing functions of that subunit. In Ureaplasma urealyticum serovar 10 (strain ATCC 33699 / Western), this protein is Large ribosomal subunit protein bL20.